The sequence spans 572 residues: Chromatin assembly factor 1 subunit B (572 aa).

WD repeat units lie at residues His11–Ala54, Arg64–Gln103, Gly127–Ile166, Glu169–Asn208, Phe228–Ala279, Arg301–Tyr347, and Ile351–Lys392. A Phosphothreonine modification is found at Thr401. Positions Asp403–Val572 are disordered. Polar residues predominate over residues Gln411–Arg430. The residue at position 416 (Ser416) is a Phosphoserine. A Phosphothreonine modification is found at Thr426. Low complexity predominate over residues Thr431–Ala452. Phosphoserine is present on Ser436. Thr440 carries the post-translational modification Phosphothreonine. A phosphoserine mark is found at Ser456 and Ser465. Position 501 is an N6-acetyllysine (Lys501). Thr502 and Thr510 each carry phosphothreonine. Polar residues predominate over residues Pro511 to Ser529. The span at Pro546–Asp559 shows a compositional bias: basic and acidic residues.

Belongs to the WD repeat HIR1 family. Subunit of the CAF-1 complex that contains RBBP4, CHAF1B and CHAF1A. CHAF1A binds directly to CHAF1B. Interacts with histones H3.1, H3.2 and H3.1t.

The protein localises to the nucleus. It is found in the cytoplasm. Acts as a component of the histone chaperone complex chromatin assembly factor 1 (CAF-1), which assembles histone octamers onto DNA during replication and repair. CAF-1 performs the first step of the nucleosome assembly process, bringing newly synthesized histones H3 and H4 to replicating DNA; histones H2A/H2B can bind to this chromatin precursor subsequent to DNA replication to complete the histone octamer. The sequence is that of Chromatin assembly factor 1 subunit B from Mus musculus (Mouse).